Reading from the N-terminus, the 85-residue chain is Large ribosomal subunit protein bL31 (85 aa).

Positions 65 to 85 (YGMGGAGKAGEDKKAGDKADA) are disordered. Residues 73-85 (AGEDKKAGDKADA) show a composition bias toward basic and acidic residues.

It belongs to the bacterial ribosomal protein bL31 family. Type A subfamily. In terms of assembly, part of the 50S ribosomal subunit.

Its function is as follows. Binds the 23S rRNA. This is Large ribosomal subunit protein bL31 from Synechococcus sp. (strain WH7803).